Here is a 195-residue protein sequence, read N- to C-terminus: SPbeta prophage-derived uncharacterized protein YotM (195 aa).

In Bacillus subtilis (strain 168), this protein is SPbeta prophage-derived uncharacterized protein YotM (yotM).